Consider the following 1016-residue polypeptide: FHIP family protein Bm1_18400 (1016 aa).

2 disordered regions span residues 586–608 (DSLR…RSSF) and 757–778 (SDGF…PLGK).

The protein belongs to the FHIP family.

The protein is FHIP family protein Bm1_18400 of Brugia malayi (Filarial nematode worm).